Consider the following 49-residue polypeptide: uncharacterized protein (49 aa).

A helical membrane pass occupies residues 23–43 (LYVISFVLFIVLFFGMFFKLI).

The protein localises to the host membrane. This is an uncharacterized protein from Spiroplasma melliferum (SpV1).